Consider the following 780-residue polypeptide: ATP-dependent 6-phosphofructokinase, muscle type (780 aa).

At Thr2 the chain carries N-acetylthreonine. The segment at 2-390 is N-terminal catalytic PFK domain 1; it reads THEEHHAART…NWEVYKLLAH (389 aa). ATP contacts are provided by residues Gly25, 88 to 89, and 118 to 121; these read RC and GDGS. Asp119 lines the Mg(2+) pocket. Residue Ser133 is modified to Phosphoserine. Substrate contacts are provided by residues 164–166, Arg201, 208–210, Glu264, Arg292, and 298–301; these read SID, MGR, and HVQR. Residue Asp166 is the Proton acceptor of the active site. A Phosphoserine modification is found at Ser377. The segment at 391–401 is interdomain linker; the sequence is IRPPAPKSGSY. Residues 402–780 form a C-terminal regulatory PFK domain 2 region; that stretch reads TVAVMNVGAP…SRKRSGEATV (379 aa). Beta-D-fructose 2,6-bisphosphate contacts are provided by residues Arg471 and 528-532; that span reads TVSNN. Ser530 is a glycosylation site (O-linked (GlcNAc) serine). Lys557 carries the N6-(2-hydroxyisobutyryl)lysine modification. Residues Arg566, 573–575, Glu629, Arg655, and 661–664 each bind beta-D-fructose 2,6-bisphosphate; these read MGG and HMQQ. Ser667 is subject to Phosphoserine. Arg735 is a binding site for beta-D-fructose 2,6-bisphosphate. Ser775 is subject to Phosphoserine; by PKA.

It belongs to the phosphofructokinase type A (PFKA) family. ATP-dependent PFK group I subfamily. Eukaryotic two domain clade 'E' sub-subfamily. In terms of assembly, homo- and heterotetramers. Phosphofructokinase (PFK) enzyme functions as a tetramer composed of different combinations of 3 types of subunits, called PFKM (M), PFKL (L) and PFKP (P). The composition of the PFK tetramer differs according to the tissue type it is present in. The kinetic and regulatory properties of the tetrameric enzyme are dependent on the subunit composition, hence can vary across tissues. Interacts (via C-terminus) with HK1 (via N-terminal spermatogenic cell-specific region). The cofactor is Mg(2+). In terms of processing, glcNAcylation decreases enzyme activity.

It is found in the cytoplasm. The catalysed reaction is beta-D-fructose 6-phosphate + ATP = beta-D-fructose 1,6-bisphosphate + ADP + H(+). Its pathway is carbohydrate degradation; glycolysis; D-glyceraldehyde 3-phosphate and glycerone phosphate from D-glucose: step 3/4. Allosterically activated by ADP, AMP, or fructose 2,6-bisphosphate, and allosterically inhibited by ATP or citrate. In terms of biological role, catalyzes the phosphorylation of D-fructose 6-phosphate to fructose 1,6-bisphosphate by ATP, the first committing step of glycolysis. This chain is ATP-dependent 6-phosphofructokinase, muscle type (PFKM), found in Oryctolagus cuniculus (Rabbit).